We begin with the raw amino-acid sequence, 518 residues long: Beta-secretase 2 (518 aa).

Positions 1–20 are cleaved as a signal peptide; it reads MGALARALLLPLLAQWLLRA. The propeptide occupies 21–62; the sequence is APELAPAPFTLPLRVAAATNRVVAPTPGPGTPAERHADGLAL. The Extracellular portion of the chain corresponds to 21-473; it reads APELAPAPFT…SEPILWIVSY (453 aa). The Peptidase A1 domain occupies 92-429; sequence YYLEMLIGTP…DRAQKRVGFA (338 aa). Residue aspartate 110 is part of the active site. Residue asparagine 170 is glycosylated (N-linked (GlcNAc...) asparagine). Disulfide bonds link cysteine 233–cysteine 433, cysteine 292–cysteine 457, and cysteine 344–cysteine 393. Aspartate 303 is a catalytic residue. Asparagine 366 carries N-linked (GlcNAc...) asparagine glycosylation. The chain crosses the membrane as a helical span at residues 474–494; sequence ALMSVCGAILLVLIVLLLLPF. Topologically, residues 495 to 518 are cytoplasmic; it reads RCQRRPRDPEVVNDESSLVRHRWK.

The protein belongs to the peptidase A1 family. As to quaternary structure, monomer. Interacts with RTN3 and RTN4. Undergoes autoproteolytic cleavage. Post-translationally, glycosylated. As to expression, brain. Present in neurons within the hippocampus, frontal cortex and temporal cortex (at protein level). Expressed at low levels in most peripheral tissues and at higher levels in colon, kidney, pancreas, placenta, prostate, stomach and trachea. Expressed at low levels in the brain. Found in spinal cord, medulla oblongata, substantia nigra and locus coruleus. Expressed in the ductal epithelium of both normal and malignant prostate.

It localises to the cell membrane. The protein localises to the golgi apparatus. It is found in the endoplasmic reticulum. The protein resides in the endosome. Its subcellular location is the melanosome. It catalyses the reaction Broad endopeptidase specificity. Cleaves Glu-Val-Asn-Leu-|-Asp-Ala-Glu-Phe in the Swedish variant of Alzheimer's amyloid precursor protein.. Functionally, responsible for the proteolytic processing of the amyloid precursor protein (APP). Cleaves APP, between residues 690 and 691, leading to the generation and extracellular release of beta-cleaved soluble APP, and a corresponding cell-associated C-terminal fragment which is later released by gamma-secretase. It has also been shown that it can cleave APP between residues 671 and 672. Involved in the proteolytic shedding of PMEL at early stages of melanosome biogenesis. Cleaves PMEL within the M-beta fragment to release the amyloidogenic PMEL luminal fragment containing M-alpha and a small portion of M-beta N-terminus. This is a prerequisite step for subsequent processing and assembly of PMEL fibrils into amyloid sheets. Responsible also for the proteolytic processing of CLTRN in pancreatic beta cells. The protein is Beta-secretase 2 (BACE2) of Homo sapiens (Human).